Consider the following 333-residue polypeptide: Dihydroorotate dehydrogenase (quinone) (333 aa).

FMN is bound by residues 56 to 60 (AGLDK) and Thr-80. Lys-60 is a substrate binding site. 105-109 (NRMGF) is a substrate binding site. Positions 133 and 166 each coordinate FMN. Asn-166 is a binding site for substrate. Ser-169 serves as the catalytic Nucleophile. Asn-171 is a binding site for substrate. FMN is bound by residues Lys-211 and Thr-239. 240–241 (NT) is a substrate binding site. FMN contacts are provided by residues Gly-262, Gly-291, and 312–313 (YS).

This sequence belongs to the dihydroorotate dehydrogenase family. Type 2 subfamily. As to quaternary structure, monomer. Requires FMN as cofactor.

Its subcellular location is the cell membrane. It catalyses the reaction (S)-dihydroorotate + a quinone = orotate + a quinol. The protein operates within pyrimidine metabolism; UMP biosynthesis via de novo pathway; orotate from (S)-dihydroorotate (quinone route): step 1/1. Functionally, catalyzes the conversion of dihydroorotate to orotate with quinone as electron acceptor. The sequence is that of Dihydroorotate dehydrogenase (quinone) from Legionella pneumophila (strain Lens).